The following is a 343-amino-acid chain: Probable dual-specificity RNA methyltransferase RlmN (343 aa).

E83 acts as the Proton acceptor in catalysis. In terms of domain architecture, Radical SAM core spans 89–323; the sequence is YLDRKTICVS…VSVRRSRGKD (235 aa). C96 and C328 form a disulfide bridge. Positions 103, 107, and 110 each coordinate [4Fe-4S] cluster. S-adenosyl-L-methionine is bound by residues 153–154, S185, 209–211, and N285; these read GE and SLH. The active-site S-methylcysteine intermediate is the C328.

This sequence belongs to the radical SAM superfamily. RlmN family. Requires [4Fe-4S] cluster as cofactor.

It localises to the cytoplasm. The enzyme catalyses adenosine(2503) in 23S rRNA + 2 reduced [2Fe-2S]-[ferredoxin] + 2 S-adenosyl-L-methionine = 2-methyladenosine(2503) in 23S rRNA + 5'-deoxyadenosine + L-methionine + 2 oxidized [2Fe-2S]-[ferredoxin] + S-adenosyl-L-homocysteine. It carries out the reaction adenosine(37) in tRNA + 2 reduced [2Fe-2S]-[ferredoxin] + 2 S-adenosyl-L-methionine = 2-methyladenosine(37) in tRNA + 5'-deoxyadenosine + L-methionine + 2 oxidized [2Fe-2S]-[ferredoxin] + S-adenosyl-L-homocysteine. Specifically methylates position 2 of adenine 2503 in 23S rRNA and position 2 of adenine 37 in tRNAs. The polypeptide is Probable dual-specificity RNA methyltransferase RlmN (Deinococcus deserti (strain DSM 17065 / CIP 109153 / LMG 22923 / VCD115)).